Consider the following 118-residue polypeptide: Large ribosomal subunit protein bL20 (118 aa).

This sequence belongs to the bacterial ribosomal protein bL20 family.

Binds directly to 23S ribosomal RNA and is necessary for the in vitro assembly process of the 50S ribosomal subunit. It is not involved in the protein synthesizing functions of that subunit. The chain is Large ribosomal subunit protein bL20 from Trichodesmium erythraeum (strain IMS101).